The chain runs to 127 residues: Mini-ribonuclease 3-like protein (127 aa).

Residue Asp19 is part of the active site.

The protein belongs to the MrnC RNase family.

Functionally, might be a ribonuclease involved in RNA processing. The protein is Mini-ribonuclease 3-like protein (mrnCL) of Ilyobacter polytropus (strain ATCC 51220 / DSM 2926 / LMG 16218 / CuHBu1).